The following is a 755-amino-acid chain: MEVHNSLHCTAPVLSSLQASASGSGTPKKTAASSAAAQNSKQLLDQLSQQQKAQEEAETHSRRDCDSPASSNSEPEKDLDELRDLNGSLTGSGSVGKSNGSLSGASSTTSAPAGTSTPGSANTNGSASGAASLSVVSATAHLKKRITSSRTPTRKAHRIKFYRNGDRFYPGITIPVSNERYRSFESLYEDLTRLLEENVKIPGAVRTIYDMVGKKITALEELEDGQSYVCSCNNENFKKVDYNTSSQPLANLTLANNSRTSSHRLAKLQRPASPLKNGVPNSIAPVPVGGGAAANGSPLNTSRFSERDSVVHPRIVTLIRNGTKPRRIIRLLLNKRNSPSFDHVLTAITQVVRLDTGYVRKVFTLSGVSVLQLSDFFGSDDVFFAYGTERVNTVDDFKLESEEQRAINAIRKTLRTAGTACKGPKPKMPVKSKKAYPPGELKAQAEAQLQASAAPANEDEEQAALLKSTGVEVAELPAAIRDNYTLSQIIGDGNFAIVLKIKDRQTGIPHALKIIDKSKCKGKEHYIDAEVRVMKKLHHPHIISLIMDVDQDTNMYLVLEYVSGGDLFDAITQVTRFSESQSRIMIRHLGSAMSYLHSMGIVHRDIKPENLLVELDDFGNVVQLKLADFGLACEVTEPLYAVCGTPTYVAPEILLEVGYGLKIDVWAAGIILYILLCGFPPFVAPDNQQEPLFDAIISGVYEFPDPYWSDIGDGVRDLIANMLQSDPDVRFTSEDILDHYWTMGNEEIGCGDYSR.

Residues 18-52 (QASASGSGTPKKTAASSAAAQNSKQLLDQLSQQQK) are compositionally biased toward low complexity. Residues 18 to 128 (QASASGSGTP…GSANTNGSAS (111 aa)) form a disordered region. Basic and acidic residues-rich tracts occupy residues 53–66 (AQEE…RDCD) and 74–84 (EPEKDLDELRD). A compositionally biased stretch (polar residues) spans 87–99 (GSLTGSGSVGKSN). Low complexity predominate over residues 100 to 128 (GSLSGASSTTSAPAGTSTPGSANTNGSAS). 2 consecutive Doublecortin domains span residues 157–243 (HRIK…VDYN) and 314–397 (RIVT…VDDF). The region spanning 484 to 742 (YTLSQIIGDG…SEDILDHYWT (259 aa)) is the Protein kinase domain. Residues 490-498 (IGDGNFAIV) and Lys-513 contribute to the ATP site. Asp-605 (proton acceptor) is an active-site residue.

Belongs to the protein kinase superfamily. CAMK Ser/Thr protein kinase family. CaMK subfamily.

It catalyses the reaction L-seryl-[protein] + ATP = O-phospho-L-seryl-[protein] + ADP + H(+). The enzyme catalyses L-threonyl-[protein] + ATP = O-phospho-L-threonyl-[protein] + ADP + H(+). The polypeptide is Serine/threonine-protein kinase GL21140 (Drosophila persimilis (Fruit fly)).